The chain runs to 55 residues: Large ribosomal subunit protein bL32c (55 aa).

It belongs to the bacterial ribosomal protein bL32 family.

It localises to the plastid. Its subcellular location is the chloroplast. This Daucus carota (Wild carrot) protein is Large ribosomal subunit protein bL32c.